The following is a 216-amino-acid chain: Thymidylate kinase (216 aa).

G10–S17 lines the ATP pocket.

It belongs to the thymidylate kinase family.

It carries out the reaction dTMP + ATP = dTDP + ADP. In terms of biological role, phosphorylation of dTMP to form dTDP in both de novo and salvage pathways of dTTP synthesis. This is Thymidylate kinase from Lactobacillus acidophilus (strain ATCC 700396 / NCK56 / N2 / NCFM).